Reading from the N-terminus, the 63-residue chain is 2-hydroxymuconate tautomerase (63 aa).

The active-site Proton acceptor; via imino nitrogen is the P2.

It belongs to the 4-oxalocrotonate tautomerase family. As to quaternary structure, homohexamer.

It catalyses the reaction (2Z,4E)-2-hydroxyhexa-2,4-dienedioate = (3E)-2-oxohex-3-enedioate. Its pathway is aromatic compound metabolism; salicylate degradation. Catalyzes the ketonization of 2-hydroxymuconate stereoselectively to yield 2-oxo-3-hexenedioate. The protein is 2-hydroxymuconate tautomerase (tdnL) of Pseudomonas putida (Arthrobacter siderocapsulatus).